A 1054-amino-acid polypeptide reads, in one-letter code: Putative disease resistance RPP13-like protein 1 (1054 aa).

2 leucine-zipper regions span residues 9–20 (LAAFLQALFQTL) and 39–53 (LERL…TAVL). The stretch at 117–147 (DFLDGNSEHLETRLEKVTIRLERLASQRNIL) forms a coiled coil. Residues 152-462 (LTAMIPKQRL…AEGFLQQTRS (311 aa)) form the NB-ARC domain. 203-210 (GIGGVGKT) is a binding site for ATP. 5 LRR repeats span residues 579–600 (RLRV…FFKN), 603–624 (HARF…LCYM), 626–648 (NLQT…ISNL), 650–672 (NLRY…GRLK), and 676–697 (TLTT…GGLH). The segment at 1018–1054 (PQYHHPQFHLPRSNVSGSPKSHGSHRSYDSRSSSRYD) is disordered. Over residues 1043-1054 (RSYDSRSSSRYD) the composition is skewed to basic and acidic residues.

This sequence belongs to the disease resistance NB-LRR family. RPP13 subfamily.

Its function is as follows. Potential disease resistance protein. The protein is Putative disease resistance RPP13-like protein 1 (RPPL1) of Arabidopsis thaliana (Mouse-ear cress).